The primary structure comprises 196 residues: ATP-dependent Clp protease proteolytic subunit (196 aa).

Residue Ser96 is the Nucleophile of the active site. His121 is a catalytic residue.

It belongs to the peptidase S14 family. Fourteen ClpP subunits assemble into 2 heptameric rings which stack back to back to give a disk-like structure with a central cavity, resembling the structure of eukaryotic proteasomes.

The protein localises to the cytoplasm. The enzyme catalyses Hydrolysis of proteins to small peptides in the presence of ATP and magnesium. alpha-casein is the usual test substrate. In the absence of ATP, only oligopeptides shorter than five residues are hydrolyzed (such as succinyl-Leu-Tyr-|-NHMec, and Leu-Tyr-Leu-|-Tyr-Trp, in which cleavage of the -Tyr-|-Leu- and -Tyr-|-Trp bonds also occurs).. Cleaves peptides in various proteins in a process that requires ATP hydrolysis. Has a chymotrypsin-like activity. Plays a major role in the degradation of misfolded proteins. In Streptococcus uberis (strain ATCC BAA-854 / 0140J), this protein is ATP-dependent Clp protease proteolytic subunit.